A 388-amino-acid polypeptide reads, in one-letter code: Beta-1,4-galactosyltransferase 5 (388 aa).

The Cytoplasmic portion of the chain corresponds to 1–14; that stretch reads MRVRRGLLRLPRRS. A helical; Signal-anchor for type II membrane protein transmembrane segment spans residues 15-35; that stretch reads LLAALFFFSLSSSLLYFVYVA. At 36 to 388 the chain is on the lumenal side; it reads PGIVNTYLFM…TPELAQVTEY (353 aa). 5 N-linked (GlcNAc...) asparagine glycosylation sites follow: Asn-77, Asn-81, Asn-90, Asn-111, and Asn-128. An intrachain disulfide couples Cys-114 to Cys-158. UDP-alpha-D-galactose contacts are provided by residues 169–173, 208–210, 235–236, Tyr-264, and Trp-296; these read PFRNR, FNR, and VD. Cysteines 229 and 248 form a disulfide. Residue Asp-236 coordinates Mn(2+). 298 to 301 is a binding site for N-acetyl-D-glucosamine; sequence GEDD. 329-330 is a binding site for UDP-alpha-D-galactose; that stretch reads YH. Arg-340 lines the N-acetyl-D-glucosamine pocket. 2 N-linked (GlcNAc...) asparagine glycosylation sites follow: Asn-364 and Asn-373.

Belongs to the glycosyltransferase 7 family. (Microbial infection) Interacts with porcine reproductive and respiratory syndrome virus GP5. Mn(2+) is required as a cofactor.

The protein resides in the golgi apparatus. The protein localises to the golgi stack membrane. It catalyses the reaction a beta-D-glucosyl-(1&lt;-&gt;1')-N-acylsphing-4-enine + UDP-alpha-D-galactose = a beta-D-Gal-(1-&gt;4)-beta-D-Glc-(1&lt;-&gt;1)-Cer(d18:1(4E)) + UDP + H(+). Its pathway is protein modification; protein glycosylation. It participates in sphingolipid metabolism. Its function is as follows. Catalyzes the synthesis of lactosylceramide (LacCer) via the transfer of galactose from UDP-galactose to glucosylceramide (GlcCer). LacCer is the starting point in the biosynthesis of all gangliosides (membrane-bound glycosphingolipids) which play pivotal roles in the CNS including neuronal maturation and axonal and myelin formation. Plays a role in the glycosylation of BMPR1A and regulation of its protein stability. Essential for extraembryonic development during early embryogenesis. In terms of biological role, (Microbial infection) May play a role in the glycosylation of porcine reproductive and respiratory syndrome virus GP5 protein and may be involved in the regulation of viral proliferation. This Sus scrofa (Pig) protein is Beta-1,4-galactosyltransferase 5 (B4GALT5).